Reading from the N-terminus, the 92-residue chain is Small ribosomal subunit protein uS19 (92 aa).

Belongs to the universal ribosomal protein uS19 family.

In terms of biological role, protein S19 forms a complex with S13 that binds strongly to the 16S ribosomal RNA. This Anoxybacillus flavithermus (strain DSM 21510 / WK1) protein is Small ribosomal subunit protein uS19.